The following is a 217-amino-acid chain: Thiopurine S-methyltransferase (217 aa).

Residues tryptophan 10, leucine 45, glutamate 66, and arginine 127 each contribute to the S-adenosyl-L-methionine site.

This sequence belongs to the class I-like SAM-binding methyltransferase superfamily. TPMT family.

It is found in the cytoplasm. It catalyses the reaction S-adenosyl-L-methionine + a thiopurine = S-adenosyl-L-homocysteine + a thiopurine S-methylether.. The sequence is that of Thiopurine S-methyltransferase from Acinetobacter baylyi (strain ATCC 33305 / BD413 / ADP1).